Here is a 102-residue protein sequence, read N- to C-terminus: Small ribosomal subunit protein uS10 (102 aa).

The protein belongs to the universal ribosomal protein uS10 family. Part of the 30S ribosomal subunit.

Its function is as follows. Involved in the binding of tRNA to the ribosomes. This chain is Small ribosomal subunit protein uS10, found in Chloroflexus aurantiacus (strain ATCC 29366 / DSM 635 / J-10-fl).